Reading from the N-terminus, the 470-residue chain is Uronate isomerase (470 aa).

Belongs to the metallo-dependent hydrolases superfamily. Uronate isomerase family.

The catalysed reaction is D-glucuronate = D-fructuronate. The enzyme catalyses aldehydo-D-galacturonate = keto-D-tagaturonate. It functions in the pathway carbohydrate metabolism; pentose and glucuronate interconversion. The chain is Uronate isomerase from Escherichia coli O17:K52:H18 (strain UMN026 / ExPEC).